A 37-amino-acid polypeptide reads, in one-letter code: Large ribosomal subunit protein bL36 (37 aa).

Belongs to the bacterial ribosomal protein bL36 family.

The polypeptide is Large ribosomal subunit protein bL36 (Thermus thermophilus (strain ATCC BAA-163 / DSM 7039 / HB27)).